Reading from the N-terminus, the 299-residue chain is Phosphoribosylaminoimidazole-succinocarboxamide synthase (299 aa).

Belongs to the SAICAR synthetase family.

It carries out the reaction 5-amino-1-(5-phospho-D-ribosyl)imidazole-4-carboxylate + L-aspartate + ATP = (2S)-2-[5-amino-1-(5-phospho-beta-D-ribosyl)imidazole-4-carboxamido]succinate + ADP + phosphate + 2 H(+). It participates in purine metabolism; IMP biosynthesis via de novo pathway; 5-amino-1-(5-phospho-D-ribosyl)imidazole-4-carboxamide from 5-amino-1-(5-phospho-D-ribosyl)imidazole-4-carboxylate: step 1/2. This Leifsonia xyli subsp. xyli (strain CTCB07) protein is Phosphoribosylaminoimidazole-succinocarboxamide synthase.